The primary structure comprises 1131 residues: Topless-related protein 2 (1131 aa).

Residues 4 to 36 form the LisH domain; the sequence is LSRELVFLILQFLDEEKFKESVHKLEQESGFFF. A CTLH domain is found at 34–92; the sequence is FFFNIKYFEEKALAGEWDEVEKYLSGFTKVDDNRYSMKIFFEIRKQKYLEALDRNDRAK. A Phosphothreonine modification is found at Thr-214. WD repeat units lie at residues 345–385, 407–446, 451–493, 495–535, 585–624, 629–668, 763–802, 829–867, 870–910, 913–952, 959–999, and 1005–1044; these read RQGS…KVVT, EPSI…LRQH, AHVG…FTFE, HEAP…SRVD, FRKK…LLTV, GGLP…RTLR, DSVS…QNPT, NPEG…VMTT, PPPP…VKTK, GHQK…KKKS, PGKA…CIHK, and ALSS…LRCR. The interval 1099–1131 is disordered; that stretch reads VGVAAGSDKAGTENGRPSSSSAANNSSSDQIQR. Residues 1116–1131 show a composition bias toward low complexity; the sequence is SSSSAANNSSSDQIQR.

Tetramer. Interacts with NINJA/AFPH2. Interacts with SMXL6, SMXL7 and SMXL8. Interacts with SPL (via EAR motif). Interacts with SPEAR3/TIE1.

Its subcellular location is the nucleus. Its function is as follows. Transcriptional corepressor. Negative regulator of jasmonate responses. This is Topless-related protein 2 (TPR2) from Arabidopsis thaliana (Mouse-ear cress).